Reading from the N-terminus, the 189-residue chain is Lipid A acyltransferase PagP (189 aa).

Positions 1-23 (MKLKSVLYLLMLLNCLGLKSAHA) are cleaved as a signal peptide. Residues His-61, Asp-104, and Ser-105 contribute to the active site.

Belongs to the lipid A palmitoyltransferase family. As to quaternary structure, homodimer.

The protein localises to the cell outer membrane. The catalysed reaction is a lipid A + a 1,2-diacyl-sn-glycero-3-phosphocholine = a hepta-acyl lipid A + a 2-acyl-sn-glycero-3-phosphocholine. It catalyses the reaction a lipid IVA + a 1,2-diacyl-sn-glycero-3-phosphocholine = a lipid IVB + a 2-acyl-sn-glycero-3-phosphocholine. It carries out the reaction a lipid IIA + a 1,2-diacyl-sn-glycero-3-phosphocholine = a lipid IIB + a 2-acyl-sn-glycero-3-phosphocholine. Transfers a fatty acid residue from the sn-1 position of a phospholipid to the N-linked hydroxyfatty acid chain on the proximal unit of lipid A or its precursors. This chain is Lipid A acyltransferase PagP, found in Erwinia amylovora (strain ATCC 49946 / CCPPB 0273 / Ea273 / 27-3).